The primary structure comprises 325 residues: MNDIETRDTGTKNDNSSEFNLSVKSHKRKRSFDDENLELEESREETSGGILKKAKTQSFSESLERFRFAHAGSNNEYRKTDVVKNSDTDNGLLKSAVETITLENGLRNRRVNVTKKSTLKASVKKSTLKKKNEVDPALLQGVPDYICENPYAIIVGLNPGITSSLKGHAFASPSNRFWKMLNKSKLLEGNAEFTYLNDKDLPAHGLGITNLCARPSSSGADLRKEEMQDGARILYEKVKRYRPQVGLFISGKGIWEEMYKMLTGKKLPKTFVFGWQPEKFGDANVFVGISSSGRAAGYSDEKKQNLWNLFAEEVNRHREIVKHAV.

The segment covering 1–11 (MNDIETRDTGT) has biased composition (basic and acidic residues). Positions 1–50 (MNDIETRDTGTKNDNSSEFNLSVKSHKRKRSFDDENLELEESREETSGGI) are disordered. The span at 12–23 (KNDNSSEFNLSV) shows a compositional bias: polar residues. Residues 34-43 (DENLELEESR) show a composition bias toward acidic residues.

The protein belongs to the uracil-DNA glycosylase (UDG) superfamily. TDG/mug family.

The protein localises to the nucleus. The enzyme catalyses Specifically hydrolyzes mismatched double-stranded DNA and polynucleotides, releasing free uracil.. Functionally, removes uracil from G/U mispairs in ssDNA. Also corrects G/G mispairs. Does not catalyze the removal of thymine from G/T mispairs. In Schizosaccharomyces pombe (strain 972 / ATCC 24843) (Fission yeast), this protein is G/U mismatch-specific uracil DNA glycosylase (thp1).